The following is a 230-amino-acid chain: Cytochrome c oxidase subunit 2 (230 aa).

The Mitochondrial intermembrane segment spans residues Met-1–Ser-14. The helical transmembrane segment at Pro-15–Met-45 threads the bilayer. Residues Leu-46 to Gln-59 are Mitochondrial matrix-facing. A helical membrane pass occupies residues Glu-60–Met-87. Topologically, residues Asp-88 to Ser-230 are mitochondrial intermembrane. The Cu cation site is built by His-161, Cys-196, Glu-198, Cys-200, His-204, and Met-207. Glu-198 is a Mg(2+) binding site. Tyr-218 carries the phosphotyrosine modification.

It belongs to the cytochrome c oxidase subunit 2 family. In terms of assembly, component of the cytochrome c oxidase (complex IV, CIV), a multisubunit enzyme composed of 14 subunits. The complex is composed of a catalytic core of 3 subunits MT-CO1, MT-CO2 and MT-CO3, encoded in the mitochondrial DNA, and 11 supernumerary subunits COX4I, COX5A, COX5B, COX6A, COX6B, COX6C, COX7A, COX7B, COX7C, COX8 and NDUFA4, which are encoded in the nuclear genome. The complex exists as a monomer or a dimer and forms supercomplexes (SCs) in the inner mitochondrial membrane with NADH-ubiquinone oxidoreductase (complex I, CI) and ubiquinol-cytochrome c oxidoreductase (cytochrome b-c1 complex, complex III, CIII), resulting in different assemblies (supercomplex SCI(1)III(2)IV(1) and megacomplex MCI(2)III(2)IV(2)). Found in a complex with TMEM177, COA6, COX18, COX20, SCO1 and SCO2. Interacts with TMEM177 in a COX20-dependent manner. Interacts with COX20. Interacts with COX16. It depends on Cu cation as a cofactor.

It is found in the mitochondrion inner membrane. The catalysed reaction is 4 Fe(II)-[cytochrome c] + O2 + 8 H(+)(in) = 4 Fe(III)-[cytochrome c] + 2 H2O + 4 H(+)(out). Its function is as follows. Component of the cytochrome c oxidase, the last enzyme in the mitochondrial electron transport chain which drives oxidative phosphorylation. The respiratory chain contains 3 multisubunit complexes succinate dehydrogenase (complex II, CII), ubiquinol-cytochrome c oxidoreductase (cytochrome b-c1 complex, complex III, CIII) and cytochrome c oxidase (complex IV, CIV), that cooperate to transfer electrons derived from NADH and succinate to molecular oxygen, creating an electrochemical gradient over the inner membrane that drives transmembrane transport and the ATP synthase. Cytochrome c oxidase is the component of the respiratory chain that catalyzes the reduction of oxygen to water. Electrons originating from reduced cytochrome c in the intermembrane space (IMS) are transferred via the dinuclear copper A center (CU(A)) of subunit 2 and heme A of subunit 1 to the active site in subunit 1, a binuclear center (BNC) formed by heme A3 and copper B (CU(B)). The BNC reduces molecular oxygen to 2 water molecules using 4 electrons from cytochrome c in the IMS and 4 protons from the mitochondrial matrix. The protein is Cytochrome c oxidase subunit 2 (MT-CO2) of Ornithorhynchus anatinus (Duckbill platypus).